A 525-amino-acid chain; its full sequence is Glutamyl-tRNA(Gln) amidotransferase subunit A, mitochondrial (525 aa).

Active-site charge relay system residues include Lys76 and Ser168. The Acyl-ester intermediate role is filled by Ser192.

The protein belongs to the amidase family. GatA subfamily. As to quaternary structure, subunit of the heterotrimeric GatCAB amidotransferase (AdT) complex, composed of A (QRSL1), B (GATB) and C (GATC) subunits.

Its subcellular location is the mitochondrion. It carries out the reaction L-glutamyl-tRNA(Gln) + L-glutamine + ATP + H2O = L-glutaminyl-tRNA(Gln) + L-glutamate + ADP + phosphate + H(+). Functionally, allows the formation of correctly charged Gln-tRNA(Gln) through the transamidation of misacylated Glu-tRNA(Gln) in the mitochondria. The reaction takes place in the presence of glutamine and ATP through an activated gamma-phospho-Glu-tRNA(Gln). The sequence is that of Glutamyl-tRNA(Gln) amidotransferase subunit A, mitochondrial (Qrsl1) from Mus musculus (Mouse).